We begin with the raw amino-acid sequence, 131 residues long: Small ribosomal subunit protein uS8 (131 aa).

Belongs to the universal ribosomal protein uS8 family. In terms of assembly, part of the 30S ribosomal subunit. Contacts proteins S5 and S12.

In terms of biological role, one of the primary rRNA binding proteins, it binds directly to 16S rRNA central domain where it helps coordinate assembly of the platform of the 30S subunit. This is Small ribosomal subunit protein uS8 from Shewanella amazonensis (strain ATCC BAA-1098 / SB2B).